Reading from the N-terminus, the 464-residue chain is ATP synthase subunit beta (464 aa).

153–160 contacts ATP; sequence GGAGVGKT.

Belongs to the ATPase alpha/beta chains family. In terms of assembly, F-type ATPases have 2 components, CF(1) - the catalytic core - and CF(0) - the membrane proton channel. CF(1) has five subunits: alpha(3), beta(3), gamma(1), delta(1), epsilon(1). CF(0) has three main subunits: a(1), b(2) and c(9-12). The alpha and beta chains form an alternating ring which encloses part of the gamma chain. CF(1) is attached to CF(0) by a central stalk formed by the gamma and epsilon chains, while a peripheral stalk is formed by the delta and b chains.

It is found in the cell membrane. It carries out the reaction ATP + H2O + 4 H(+)(in) = ADP + phosphate + 5 H(+)(out). Functionally, produces ATP from ADP in the presence of a proton gradient across the membrane. The catalytic sites are hosted primarily by the beta subunits. In Acetivibrio thermocellus (strain ATCC 27405 / DSM 1237 / JCM 9322 / NBRC 103400 / NCIMB 10682 / NRRL B-4536 / VPI 7372) (Clostridium thermocellum), this protein is ATP synthase subunit beta.